We begin with the raw amino-acid sequence, 137 residues long: Regulator of cell cycle RGCC (137 aa).

Positions 57–116 are disordered; the sequence is LERMKRRSSASVSDSSGFSDSESADSVYRDSFTFSDEKLNSPTNSSPALLPSAVTPRKAK. A compositionally biased stretch (low complexity) spans 65–82; it reads SASVSDSSGFSDSESADS. Phosphoserine occurs at positions 67, 69, 71, 75, 91, and 97. Position 111 is a phosphothreonine (Thr-111).

As to quaternary structure, interacts with CDK1 and PLK1. Interacts with SMAD3.

The protein resides in the cytoplasm. It is found in the nucleus. It localises to the cytoskeleton. Its subcellular location is the microtubule organizing center. The protein localises to the centrosome. Functionally, modulates the activity of cell cycle-specific kinases. Enhances CDK1 activity. May contribute to the regulation of the cell cycle. May inhibit growth of glioma cells by promoting arrest of mitotic progression at the G2/M transition. Fibrogenic factor contributing to the pathogenesis of renal fibrosis through fibroblast activation. This chain is Regulator of cell cycle RGCC (Rgcc), found in Mus musculus (Mouse).